Here is a 450-residue protein sequence, read N- to C-terminus: Na(+)/H(+) antiporter NhaA (450 aa).

Transmembrane regions (helical) follow at residues 24 to 44 (FFAI…LALV), 75 to 95 (LILW…GLEI), 111 to 131 (ALPI…YLAL), 140 to 160 (GWGV…SLLG), 169 to 189 (VFLT…IAFF), 196 to 216 (FSFL…NWLG), 224 to 244 (LLVG…ATIA), 318 to 338 (WVAW…TVSA), 352 to 372 (IFFG…WLLV), 390 to 410 (GIGW…TLAF), and 422 to 442 (SILC…RVLL).

This sequence belongs to the NhaA Na(+)/H(+) (TC 2.A.33) antiporter family.

It localises to the cell inner membrane. It carries out the reaction Na(+)(in) + 2 H(+)(out) = Na(+)(out) + 2 H(+)(in). Na(+)/H(+) antiporter that extrudes sodium in exchange for external protons. The polypeptide is Na(+)/H(+) antiporter NhaA (Oleidesulfovibrio alaskensis (strain ATCC BAA-1058 / DSM 17464 / G20) (Desulfovibrio alaskensis)).